The following is a 288-amino-acid chain: Quinate/shikimate dehydrogenase (288 aa).

The substrate site is built by lysine 71 and aspartate 107. NAD(+) contacts are provided by residues 132–135, 155–158, lysine 205, 232–235, and glycine 255; these read AGGA, NRRD, and CVYN.

The protein belongs to the shikimate dehydrogenase family. In terms of assembly, homodimer.

The enzyme catalyses L-quinate + NAD(+) = 3-dehydroquinate + NADH + H(+). It carries out the reaction L-quinate + NADP(+) = 3-dehydroquinate + NADPH + H(+). It catalyses the reaction shikimate + NADP(+) = 3-dehydroshikimate + NADPH + H(+). The catalysed reaction is shikimate + NAD(+) = 3-dehydroshikimate + NADH + H(+). Its pathway is metabolic intermediate biosynthesis; chorismate biosynthesis; chorismate from D-erythrose 4-phosphate and phosphoenolpyruvate: step 4/7. Its function is as follows. The actual biological function of YdiB remains unclear, nor is it known whether 3-dehydroshikimate or quinate represents the natural substrate. Catalyzes the reversible NAD-dependent reduction of both 3-dehydroshikimate (DHSA) and 3-dehydroquinate to yield shikimate (SA) and quinate, respectively. It can use both NAD or NADP for catalysis, however it has higher catalytic efficiency with NAD. This Escherichia coli O7:K1 (strain IAI39 / ExPEC) protein is Quinate/shikimate dehydrogenase.